The primary structure comprises 107 residues: MPRKRLTGIVVSDKMDKTVVVAVEKLVQHTIYKKYVKRTKKYHAHDERNECKIGDVVEIEETRPLSKTKRWRVVRIIQRFEPERVLKEEEDIQEEIEAVEGKGGVES.

This sequence belongs to the universal ribosomal protein uS17 family. As to quaternary structure, part of the 30S ribosomal subunit.

In terms of biological role, one of the primary rRNA binding proteins, it binds specifically to the 5'-end of 16S ribosomal RNA. The sequence is that of Small ribosomal subunit protein uS17 from Thermotoga sp. (strain RQ2).